Reading from the N-terminus, the 181-residue chain is ATP-dependent protease subunit HslV (181 aa).

Threonine 9 is an active-site residue. 3 residues coordinate Na(+): glycine 164, cysteine 167, and threonine 170.

It belongs to the peptidase T1B family. HslV subfamily. As to quaternary structure, a double ring-shaped homohexamer of HslV is capped on each side by a ring-shaped HslU homohexamer. The assembly of the HslU/HslV complex is dependent on binding of ATP.

Its subcellular location is the cytoplasm. The catalysed reaction is ATP-dependent cleavage of peptide bonds with broad specificity.. Its activity is regulated as follows. Allosterically activated by HslU binding. Its function is as follows. Protease subunit of a proteasome-like degradation complex believed to be a general protein degrading machinery. The polypeptide is ATP-dependent protease subunit HslV (Gemmatimonas aurantiaca (strain DSM 14586 / JCM 11422 / NBRC 100505 / T-27)).